An 89-amino-acid polypeptide reads, in one-letter code: Small ribosomal subunit protein uS15 (89 aa).

It belongs to the universal ribosomal protein uS15 family. In terms of assembly, part of the 30S ribosomal subunit. Forms a bridge to the 50S subunit in the 70S ribosome, contacting the 23S rRNA.

One of the primary rRNA binding proteins, it binds directly to 16S rRNA where it helps nucleate assembly of the platform of the 30S subunit by binding and bridging several RNA helices of the 16S rRNA. Its function is as follows. Forms an intersubunit bridge (bridge B4) with the 23S rRNA of the 50S subunit in the ribosome. This is Small ribosomal subunit protein uS15 from Gloeobacter violaceus (strain ATCC 29082 / PCC 7421).